Reading from the N-terminus, the 307-residue chain is Voltage-dependent anion channel-forming protein alr2987 (307 aa).

4 helical membrane-spanning segments follow: residues 19–39 (VIGA…LVTL), 47–67 (VSQP…LLVF), 209–229 (PLAY…LLPF), and 238–258 (WTGL…AIGL).

It belongs to the anion channel-forming bestrophin (TC 1.A.46) family.

Its subcellular location is the cell membrane. The sequence is that of Voltage-dependent anion channel-forming protein alr2987 from Nostoc sp. (strain PCC 7120 / SAG 25.82 / UTEX 2576).